We begin with the raw amino-acid sequence, 967 residues long: A disintegrin and metalloproteinase with thrombospondin motifs 1 (967 aa).

Disordered stretches follow at residues M1 to S27 and G192 to K250. The first 49 residues, M1 to A49, serve as a signal peptide directing secretion. Residues L50–R252 constitute a propeptide that is removed on maturation. The Cysteine switch signature appears at G196–D203. Zn(2+) is bound at residue C198. The segment covering D203–E212 has biased composition (basic and acidic residues). Acidic residues predominate over residues T213–G226. Positions R258–P467 constitute a Peptidase M12B domain. Ca(2+) is bound by residues E261, D344, and D351. 4 disulfide bridges follow: C333/C385, C362/C367, C379/C462, and C417/C446. H401 provides a ligand contact to Zn(2+). The active site involves E402. Residues H405 and H411 each coordinate Zn(2+). The Ca(2+) site is built by C462 and D465. The Disintegrin domain occupies D476 to H559. 4 disulfides stabilise this stretch: C488–C511, C499–C521, C506–C540, and C534–C545. An N-linked (GlcNAc...) asparagine glycan is attached at N547. The TSP type-1 1 domain occupies H559–P614. 3 disulfide bridges follow: C571–C608, C575–C613, and C586–C598. Residues N720 and N764 are each glycosylated (N-linked (GlcNAc...) asparagine). Residues K725–F849 form a spacer region. 2 consecutive TSP type-1 domains span residues T854–A905 and P908–S967.

The cofactor is Zn(2+). Post-translationally, the precursor is cleaved by a furin endopeptidase. Glycosylated. Can be O-fucosylated by POFUT2 on a serine or a threonine residue found within the consensus sequence C1-X(2)-(S/T)-C2-G of the TSP type-1 repeat domains where C1 and C2 are the first and second cysteine residue of the repeat, respectively. Fucosylated repeats can then be further glycosylated by the addition of a beta-1,3-glucose residue by the glucosyltransferase, B3GALTL. Fucosylation mediates the efficient secretion of ADAMTS family members. Can also be C-glycosylated with one or two mannose molecules on tryptophan residues within the consensus sequence W-X-X-W of the TPRs, and N-glycosylated. These other glycosylations can also facilitate secretion.

Its subcellular location is the secreted. It is found in the extracellular space. The protein localises to the extracellular matrix. Metalloprotease which cleaves aggrecan, a cartilage proteoglycan, at the '1938-Glu-|-Leu-1939' site (within the chondroitin sulfate attachment domain), and may be involved in its turnover. Also cleaves COMP. Has angiogenic inhibitor activity. May play a critical role in follicular rupture. This is A disintegrin and metalloproteinase with thrombospondin motifs 1 (ADAMTS1) from Homo sapiens (Human).